We begin with the raw amino-acid sequence, 411 residues long: Tyrosine--tRNA ligase (411 aa).

L-tyrosine is bound at residue Y34. The 'HIGH' region motif lies at 39–48 (CTATSLHIGS). L-tyrosine is bound by residues Y171 and Q175. The 'KMSKS' region signature appears at 231-235 (KMGKT). K234 lines the ATP pocket. The region spanning 345–411 (ISAYELFHEA…GKKRHILVRV (67 aa)) is the S4 RNA-binding domain.

The protein belongs to the class-I aminoacyl-tRNA synthetase family. TyrS type 1 subfamily. As to quaternary structure, homodimer.

Its subcellular location is the cytoplasm. The catalysed reaction is tRNA(Tyr) + L-tyrosine + ATP = L-tyrosyl-tRNA(Tyr) + AMP + diphosphate + H(+). Catalyzes the attachment of tyrosine to tRNA(Tyr) in a two-step reaction: tyrosine is first activated by ATP to form Tyr-AMP and then transferred to the acceptor end of tRNA(Tyr). The protein is Tyrosine--tRNA ligase of Rickettsia africae (strain ESF-5).